The chain runs to 227 residues: Cytochrome c oxidase subunit 2 (227 aa).

At 1–14 (MANHSQLGFQDASS) the chain is on the mitochondrial intermembrane side. A helical membrane pass occupies residues 15–45 (PIMEELVEFHDHALMVALAICSLVLYLLTLM). Residues 46-58 (LTQKLSSNTVDAQ) are Mitochondrial matrix-facing. The chain crosses the membrane as a helical span at residues 59-86 (EVELIWTILPAIVLVLLALPSLQILYMM). Residues 87 to 227 (DEIEEPDLTL…FETWSSLLSS (141 aa)) are Mitochondrial intermembrane-facing. Residues His160, Cys195, Glu197, Cys199, His203, and Met206 each contribute to the Cu cation site. Residue Glu197 participates in Mg(2+) binding.

The protein belongs to the cytochrome c oxidase subunit 2 family. Component of the cytochrome c oxidase (complex IV, CIV), a multisubunit enzyme composed of 14 subunits. The complex is composed of a catalytic core of 3 subunits MT-CO1, MT-CO2 and MT-CO3, encoded in the mitochondrial DNA, and 11 supernumerary subunits COX4I, COX5A, COX5B, COX6A, COX6B, COX6C, COX7A, COX7B, COX7C, COX8 and NDUFA4, which are encoded in the nuclear genome. The complex exists as a monomer or a dimer and forms supercomplexes (SCs) in the inner mitochondrial membrane with NADH-ubiquinone oxidoreductase (complex I, CI) and ubiquinol-cytochrome c oxidoreductase (cytochrome b-c1 complex, complex III, CIII), resulting in different assemblies (supercomplex SCI(1)III(2)IV(1) and megacomplex MCI(2)III(2)IV(2)). Found in a complex with TMEM177, COA6, COX18, COX20, SCO1 and SCO2. Interacts with TMEM177 in a COX20-dependent manner. Interacts with COX20. Interacts with COX16. Cu cation is required as a cofactor.

The protein localises to the mitochondrion inner membrane. The enzyme catalyses 4 Fe(II)-[cytochrome c] + O2 + 8 H(+)(in) = 4 Fe(III)-[cytochrome c] + 2 H2O + 4 H(+)(out). Component of the cytochrome c oxidase, the last enzyme in the mitochondrial electron transport chain which drives oxidative phosphorylation. The respiratory chain contains 3 multisubunit complexes succinate dehydrogenase (complex II, CII), ubiquinol-cytochrome c oxidoreductase (cytochrome b-c1 complex, complex III, CIII) and cytochrome c oxidase (complex IV, CIV), that cooperate to transfer electrons derived from NADH and succinate to molecular oxygen, creating an electrochemical gradient over the inner membrane that drives transmembrane transport and the ATP synthase. Cytochrome c oxidase is the component of the respiratory chain that catalyzes the reduction of oxygen to water. Electrons originating from reduced cytochrome c in the intermembrane space (IMS) are transferred via the dinuclear copper A center (CU(A)) of subunit 2 and heme A of subunit 1 to the active site in subunit 1, a binuclear center (BNC) formed by heme A3 and copper B (CU(B)). The BNC reduces molecular oxygen to 2 water molecules using 4 electrons from cytochrome c in the IMS and 4 protons from the mitochondrial matrix. This chain is Cytochrome c oxidase subunit 2 (MT-CO2), found in Coturnix japonica (Japanese quail).